The primary structure comprises 605 residues: Putative glutaminase 2 (605 aa).

Substrate is bound by residues Ser213, Asn262, Glu308, Asn315, Tyr342, Tyr394, and Val412. ANK repeat units lie at residues 480–509 (DRLI…DLNT) and 513–543 (DDRT…DVDK). Basic and acidic residues predominate over residues 569 to 581 (KAMKRPEQHRKDS). Positions 569–605 (KAMKRPEQHRKDSVSSLDTDDEIDDDGFPEKPSFTID) are disordered. Acidic residues predominate over residues 586-595 (DTDDEIDDDG).

The protein belongs to the glutaminase family.

It carries out the reaction L-glutamine + H2O = L-glutamate + NH4(+). The sequence is that of Putative glutaminase 2 (glna-2) from Caenorhabditis elegans.